A 681-amino-acid polypeptide reads, in one-letter code: UvrABC system protein C (681 aa).

Residues 1–23 (MNGKKLPDGGILFDETDDEDDDA) are disordered. The segment covering 14–23 (DETDDEDDDA) has biased composition (acidic residues). Residues 67–145 (NSPGVYRMFN…IKRLRPRFNV (79 aa)) form the GIY-YIG domain. One can recognise a UVR domain in the interval 255-290 (QAVKTAIARQMNEASEDLDFERAAIYRDRLAALSHV).

Belongs to the UvrC family. Interacts with UvrB in an incision complex.

It is found in the cytoplasm. The UvrABC repair system catalyzes the recognition and processing of DNA lesions. UvrC both incises the 5' and 3' sides of the lesion. The N-terminal half is responsible for the 3' incision and the C-terminal half is responsible for the 5' incision. In Agrobacterium fabrum (strain C58 / ATCC 33970) (Agrobacterium tumefaciens (strain C58)), this protein is UvrABC system protein C.